Consider the following 515-residue polypeptide: 3,4-dehydroadipyl-CoA semialdehyde dehydrogenase (515 aa).

Residues Glu255 and Cys294 contribute to the active site. The interval 470 to 515 (VMPTCLHGGPRARRRRRGVGRSARAGDVSPPLRRAGRPRGAGSPVA) is disordered. Residues 479–488 (PRARRRRRGV) are compositionally biased toward basic residues. The segment covering 489–515 (GRSARAGDVSPPLRRAGRPRGAGSPVA) has biased composition (low complexity).

The protein belongs to the aldehyde dehydrogenase family. Homodimer.

It catalyses the reaction (3Z)-6-oxohex-3-enoyl-CoA + NADP(+) + H2O = cis-3,4-dehydroadipyl-CoA + NADPH + 2 H(+). In terms of biological role, catalyzes the NADP-dependent oxidation of 3,4-dehydroadipyl-CoA semialdehyde to form cis-3,4-dehydroadipyl-CoA. The sequence is that of 3,4-dehydroadipyl-CoA semialdehyde dehydrogenase (boxD) from Aromatoleum evansii (Azoarcus evansii).